The chain runs to 129 residues: Lysozyme C, milk isozyme (129 aa).

Residues 1 to 129 enclose the C-type lysozyme domain; sequence KIFSKCELAR…LSKYLASCNL (129 aa). Disulfide bonds link Cys6/Cys127, Cys30/Cys115, Cys65/Cys80, and Cys76/Cys94. Catalysis depends on residues Glu35 and Asp53. The Ca(2+) site is built by Lys82, Asp85, Asn87, Asp90, and Asp91.

Belongs to the glycosyl hydrolase 22 family. In terms of assembly, monomer. Requires Ca(2+) as cofactor.

It catalyses the reaction Hydrolysis of (1-&gt;4)-beta-linkages between N-acetylmuramic acid and N-acetyl-D-glucosamine residues in a peptidoglycan and between N-acetyl-D-glucosamine residues in chitodextrins.. In terms of biological role, lysozymes have primarily a bacteriolytic function; those in tissues and body fluids are associated with the monocyte-macrophage system and enhance the activity of immunoagents. In Canis lupus familiaris (Dog), this protein is Lysozyme C, milk isozyme.